Consider the following 467-residue polypeptide: Cysteine--tRNA ligase (467 aa).

Position 29 (Cys29) interacts with Zn(2+). A 'HIGH' region motif is present at residues Pro31–Asn41. Zn(2+) contacts are provided by Cys209, His234, and Glu238. The 'KMSKS' region motif lies at Lys266–Ser270. Lys269 serves as a coordination point for ATP. Phosphoserine is present on Ser270.

The protein belongs to the class-I aminoacyl-tRNA synthetase family. Monomer. Zn(2+) is required as a cofactor.

The protein resides in the cytoplasm. It catalyses the reaction tRNA(Cys) + L-cysteine + ATP = L-cysteinyl-tRNA(Cys) + AMP + diphosphate. The chain is Cysteine--tRNA ligase from Bacillus licheniformis (strain ATCC 14580 / DSM 13 / JCM 2505 / CCUG 7422 / NBRC 12200 / NCIMB 9375 / NCTC 10341 / NRRL NRS-1264 / Gibson 46).